Here is a 203-residue protein sequence, read N- to C-terminus: A-type ATP synthase subunit E (203 aa).

Belongs to the V-ATPase E subunit family. As to quaternary structure, has multiple subunits with at least A(3), B(3), C, D, E, F, H, I and proteolipid K(x).

It localises to the cell membrane. Its function is as follows. Component of the A-type ATP synthase that produces ATP from ADP in the presence of a proton gradient across the membrane. In Desulfurococcus sp. (strain SY), this protein is A-type ATP synthase subunit E.